The primary structure comprises 472 residues: 2-amino-4-ketopentanoate thiolase beta subunit (472 aa).

At Lys-102 the chain carries N6-(pyridoxal phosphate)lysine. Pyridoxal 5'-phosphate is bound by residues Asn-128 and 238-242; that span reads AGGGN.

The protein belongs to the threonine synthase family. Heterodimer with OrtA. It depends on pyridoxal 5'-phosphate as a cofactor.

The enzyme catalyses D-alanine + acetyl-CoA = (2R)-2-amino-4-oxopentanoate + CoA. Functionally, involved in the ornithine fermentation pathway. Catalyzes the thiolytic cleavage of 2-amino-4-ketopentanoate (AKP) with coenzyme A (CoA) to form acetyl-CoA and alanine. It is strictly specific for AKP. The chain is 2-amino-4-ketopentanoate thiolase beta subunit from Unknown prokaryotic organism.